Consider the following 349-residue polypeptide: Dihydroorotate dehydrogenase (quinone) (349 aa).

FMN-binding positions include 67 to 71 and Thr91; that span reads AGLDK. Lys71 contributes to the substrate binding site. Residue 116–120 coordinates substrate; the sequence is NRLGF. Positions 147 and 180 each coordinate FMN. Position 180 (Asn180) interacts with substrate. Residue Ser183 is the Nucleophile of the active site. Asn185 contributes to the substrate binding site. Lys225 and Thr253 together coordinate FMN. 254 to 255 lines the substrate pocket; sequence NT. Residues Gly276, Gly305, and 326 to 327 contribute to the FMN site; that span reads YT.

This sequence belongs to the dihydroorotate dehydrogenase family. Type 2 subfamily. As to quaternary structure, monomer. It depends on FMN as a cofactor.

The protein resides in the cell membrane. The enzyme catalyses (S)-dihydroorotate + a quinone = orotate + a quinol. It functions in the pathway pyrimidine metabolism; UMP biosynthesis via de novo pathway; orotate from (S)-dihydroorotate (quinone route): step 1/1. Its function is as follows. Catalyzes the conversion of dihydroorotate to orotate with quinone as electron acceptor. This is Dihydroorotate dehydrogenase (quinone) from Bordetella avium (strain 197N).